Reading from the N-terminus, the 3008-residue chain is Genome polyprotein (3008 aa).

Ser2 carries the N-acetylserine; by host modification. Positions 2–23 are interaction with STAT1; the sequence is STNPKPQRKTKRNTNRRPMDVK. Residues 2–58 form an interaction with EIF2AK2/PKR region; the sequence is STNPKPQRKTKRNTNRRPMDVKFPGGGQIVGGVYLLPRRGPRLGVRATRKTSERSQP. Positions 2 to 59 are interaction with DDX3X; it reads STNPKPQRKTKRNTNRRPMDVKFPGGGQIVGGVYLLPRRGPRLGVRATRKTSERSQPR. Positions 2–75 are disordered; that stretch reads STNPKPQRKT…PKARRPEGRS (74 aa). At 2-168 the chain is on the cytoplasmic side; sequence STNPKPQRKT…EDGINYATGN (167 aa). 2 short sequence motifs (nuclear localization signal) span residues 5 to 13 and 38 to 43; these read PKPQRKTKR and PRRGPR. Basic residues predominate over residues 7 to 16; that stretch reads PQRKTKRNTN. Residues 32 to 47 show a composition bias toward low complexity; sequence GGVYLLPRRGPRLGVR. Ser53 is subject to Phosphoserine; by host. Short sequence motifs (nuclear localization signal) lie at residues 58 to 64 and 66 to 71; these read PRGRRQP and PKARRP. Over residues 58–68 the composition is skewed to basic residues; sequence PRGRRQPIPKA. Ser99 and Ser116 each carry phosphoserine; by host. The interval 112-152 is important for endoplasmic reticulum and mitochondrial localization; it reads PRGRSRNLGKVIDTLTCGFADLMGYIPLVGAPVGSVARALA. The interaction with APOA2 stretch occupies residues 122–173; it reads VIDTLTCGFADLMGYIPLVGAPVGSVARALAHGVRALEDGINYATGNLPGCS. The interval 164–167 is important for lipid droplets localization; the sequence is YATG. The helical transmembrane segment at 169-189 threads the bilayer; the sequence is LPGCSFSIFLLALLSCLTVPA. A propeptide spans 178–191 (ER anchor for the core protein, removed in mature form by host signal peptidase); it reads LLALLSCLTVPASA. Topologically, residues 190 to 358 are lumenal; sequence SAVNYRNVSG…SGGHWGVLVG (169 aa). 3 N-linked (GlcNAc...) asparagine; by host glycosylation sites follow: Asn196, Asn209, and Asn234. Residues 265–296 form an important for fusion region; sequence MVGAATVCSGLYIGDLCGGLFLVGQMFSFRPR. A glycan (N-linked (GlcNAc...) asparagine; by host) is linked at Asn305. A helical transmembrane segment spans residues 359 to 379; that stretch reads VAYFSMQANWAKVILVLFLFA. Topologically, residues 380–725 are lumenal; sequence GVDAETHVSG…WEYVVLAFLL (346 aa). Positions 385–412 are HVR1; the sequence is THVSGAAVGRSTAGLANLFSSGSKQNLQ. N-linked (GlcNAc...) (high mannose) asparagine; by host glycosylation is found at Asn417, Asn423, and Asn430. 4 disulfides stabilise this stretch: Cys429–Cys553, Cys452–Cys459, Cys487–Cys495, and Cys504–Cys509. An N-linked (GlcNAc...) asparagine; by host glycan is attached at Asn448. The HVR2 stretch occupies residues 475 to 479; the sequence is ANISG. Residue Asn476 is glycosylated (N-linked (GlcNAc...) asparagine; by host). Residues 481-494 form a CD81-binding 1 region; sequence SDDRPYCWHYAPRP. The N-linked (GlcNAc...) asparagine; by host glycan is linked to Asn533. The tract at residues 545–552 is CD81-binding 2; sequence PPHGAWFG. Asn557 carries an N-linked (GlcNAc...) asparagine; by host glycan. 4 cysteine pairs are disulfide-bonded: Cys565–Cys570, Cys581–Cys585, Cys597–Cys620, and Cys607–Cys644. Asn623 and Asn645 each carry an N-linked (GlcNAc...) (high mannose) asparagine; by host glycan. The cysteines at positions 652 and 677 are disulfide-linked. The segment at 660–671 is PKR/eIF2-alpha phosphorylation homology domain (PePHD); it reads VELSPLLLTTTA. Residues 726 to 746 form a helical membrane-spanning segment; sequence LADARVSAYLWMMFMVSQVEA. At 747 to 757 the chain is on the lumenal side; that stretch reads ALSNLININAA. A helical transmembrane segment spans residues 758–778; that stretch reads SAAGAQGFWYAILFICIVWHV. At 779 to 782 the chain is on the cytoplasmic side; that stretch reads KGRF. Residues 783–803 form a helical membrane-spanning segment; sequence PAAAAYAACGLWPCFLLLLML. The Lumenal segment spans residues 804–813; it reads PERAYAYDQE. A helical transmembrane segment spans residues 814 to 834; sequence VAGSLGGAIVVMLTILTLSPH. Residues 835–881 are Cytoplasmic-facing; the sequence is YKLWLARGLWWIQYFIARTEAVLHVYIPSFNVRGPRDSVIVLAVLVC. Residues 882-902 form a helical membrane-spanning segment; the sequence is PDLVFDITKYLLAILGPLHIL. Over 903–928 the chain is Lumenal; the sequence is QASLLRIPYFVRAQALVKICSLLRGV. Residues 903–1026 enclose the Peptidase C18 domain; that stretch reads QASLLRIPYF…TETSKGWRLL (124 aa). The interval 904-1206 is protease NS2-3; sequence ASLLRIPYFV…PVESLETTMR (303 aa). The S-palmitoyl cysteine; by host moiety is linked to residue Cys922. A helical transmembrane segment spans residues 929–949; that stretch reads VYGKYFQMVVLKSRGLTGTYI. Residues 929–949 are interaction with host SCPS1; sequence VYGKYFQMVVLKSRGLTGTYI. Residues 950 to 1657 lie on the Cytoplasmic side of the membrane; sequence YDHLTPMSDW…CMSADLEVVT (708 aa). Active-site for protease NS2 activity; shared with dimeric partner residues include His952, Glu972, and Cys993. Positions 1027–1208 constitute a Peptidase S29 domain; sequence APITAYAQQT…ESLETTMRSP (182 aa). Catalysis depends on charge relay system; for serine protease NS3 activity residues His1083 and Asp1107. Zn(2+) is bound by residues Cys1123 and Cys1125. Ser1165 acts as the Charge relay system; for serine protease NS3 activity in catalysis. Zn(2+) contacts are provided by Cys1171 and His1175. The Helicase ATP-binding domain occupies 1217–1369; the sequence is PAVPQTYQVA…SNIEEVALPT (153 aa). Residue 1230 to 1237 coordinates ATP; it reads APTGSGKS. Mg(2+) contacts are provided by Ser1237 and Glu1317. The short motif at 1316 to 1319 is the DECH box element; sequence DECY. An RNA-binding region spans residues 1486–1498; that stretch reads QRRGRTGRGRLGT. The chain crosses the membrane as a helical span at residues 1658 to 1678; it reads STWVLVGGVLAALAAYCLSVG. The segment at 1679-1690 is NS3-binding; the sequence is SVVIVGRVVLSG. At 1679–1805 the chain is on the cytoplasmic side; it reads SVVIVGRVVL…AVTSPLTTQQ (127 aa). A helical membrane pass occupies residues 1806 to 1826; that stretch reads TLLFNILGGWVASQIRDSDAS. At 1827–1828 the chain is on the lumenal side; the sequence is TA. The chain crosses the membrane as a helical span at residues 1829-1849; that stretch reads FVVSGLAGAAVGSVGLGKILV. Residue Asp1850 is a topological domain, cytoplasmic. A helical membrane pass occupies residues 1851–1871; the sequence is ILPGYGAGVRGAVVTFKIMSG. Residues 1872–1881 lie on the Lumenal side of the membrane; the sequence is EMPSTEDLVN. Residues 1882–1902 traverse the membrane as a helical segment; the sequence is LLPAILSPGALVVEVVCPAIL. Over 1903–1972 the chain is Cytoplasmic; it reads RRHVGPGEGA…WINEDCSTPC (70 aa). Cys1972 carries the S-palmitoyl cysteine; by host lipid modification. The stretch at 1973-2002 is an intramembrane region; that stretch reads AESWLWEVWDWVLHVLSDFKTCLKAKFVPL. Residues 2003-2987 are Cytoplasmic-facing; it reads MPGIPLLSWP…YHSMSHARPR (985 aa). Zn(2+)-binding residues include Cys2029, Cys2031, and Cys2052. Residues 2120-2208 are FKBP8-binding; it reads ELFTEVDGIR…ASSSASQLSP (89 aa). The interval 2120-2329 is transcriptional activation; that stretch reads ELFTEVDGIR…PVPSPRRKRT (210 aa). Residues 2135–2139 form an interaction with non-structural protein 4A region; the sequence is PKCKP. The interaction with host SKP2 stretch occupies residues 2189–2435; the sequence is RLARGSRPSL…ALVTPCAAEE (247 aa). 5 positions are modified to phosphoserine; by host: Ser2194, Ser2197, Ser2201, Ser2204, and Ser2207. An ISDR region spans residues 2210–2245; it reads LLQATCTAPHDSPGTDLLEANLLWGSTATRVETDEK. Residues 2210 to 2272 form an interaction with EIF2AK2/PKR region; the sequence is LLQATCTAPH…REVSVAAEIL (63 aa). Positions 2245–2303 are NS4B-binding; that stretch reads KVIILDSFESCVAEQNDDREVSVAAEILRPTKKFPPALPIWARPDYNPPLTETWKQQDY. Positions 2296–2373 are V3; that stretch reads ETWKQQDYQA…TPTETTDSGP (78 aa). The short motif at 2319–2322 is the SH3-binding element; the sequence is PPVP. A Nuclear localization signal motif is present at residues 2324–2332; sequence PRRKRTVQL. Residues 2346–2406 are disordered; that stretch reads AKTFGQSEPS…DPDLTSDSWS (61 aa). Residue Lys2347 forms a Glycyl lysine isopeptide (Lys-Gly) (interchain with G-Cter in ubiquitin) linkage. Ser2446 carries the phosphoserine; by host modification. In terms of domain architecture, RdRp catalytic spans 2631–2749; that stretch reads PMGFSYDTRC…IAESDGVEED (119 aa). Residues Asp2637, Asp2735, and Asp2736 each contribute to the Mg(2+) site. Residues 2988–3008 traverse the membrane as a helical segment; it reads YLLLCLLILTVGVGIFLLPAR.

It belongs to the hepacivirus polyprotein family. In terms of assembly, homooligomer. Interacts with E1 (via C-terminus). Interacts with the non-structural protein 5A. Interacts (via N-terminus) with host STAT1 (via SH2 domain); this interaction results in decreased STAT1 phosphorylation and ubiquitin-mediated proteasome-dependent STAT1 degradation, leading to decreased IFN-stimulated gene transcription. Interacts with host STAT3; this interaction constitutively activates STAT3. Interacts with host LTBR receptor. Interacts with host TNFRSF1A receptor and possibly induces apoptosis. Interacts with host HNRPK. Interacts with host YWHAE. Interacts with host UBE3A/E6AP. Interacts with host DDX3X. Interacts with host APOA2. Interacts with host RXRA protein. Interacts with host SP110 isoform 3/Sp110b; this interaction sequesters the transcriptional corepressor SP110 away from the nucleus. Interacts with host CREB3 nuclear transcription protein; this interaction triggers cell transformation. Interacts with host ACY3. Interacts with host C1QR1. Interacts with host RBM24; this interaction, which enhances the interaction of the mature core protein with 5'-UTR, may inhibit viral translation and favor replication. Interacts with host EIF2AK2/PKR; this interaction induces the autophosphorylation of EIF2AK2. Part of the viral assembly initiation complex composed of NS2, E1, E2, NS3, NS4A, NS5A and the mature core protein. Forms a heterodimer with envelope glycoprotein E2. Interacts with mature core protein. Interacts with protease NS2. The heterodimer E1/E2 interacts with host CLDN1; this interaction plays a role in viral entry into host cell. Interacts with host SPSB2 (via C-terminus). Part of the viral assembly initiation complex composed of NS2, E1, E2, NS3, NS4A, NS5A and the mature core protein. Interacts with host NEURL3; this interaction prevents E1 binding to glycoprotein E2. As to quaternary structure, forms a heterodimer with envelope glycoprotein E1. Interacts with host CD81 and SCARB1 receptors; these interactions play a role in viral entry into host cell. Interacts with host EIF2AK2/PKR; this interaction inhibits EIF2AK2 and probably allows the virus to evade the innate immune response. Interacts with host CD209/DC-SIGN and CLEC4M/DC-SIGNR. Interact with host SPCS1; this interaction is essential for viral particle assembly. Interacts with protease NS2. The heterodimer E1/E2 interacts with host CLDN1; this interaction plays a role in viral entry into host cell. Part of the viral assembly initiation complex composed of NS2, E1, E2, NS3, NS4A, NS5A and the mature core protein. Interacts with host SLC3A2/4F2hc; the interaction may facilitate viral entry into host cell. Interacts with human PLSCR1. In terms of assembly, homohexamer. Homoheptamer. Interacts with protease NS2. Homodimer. Interacts with host SPCS1; this interaction is essential for viral particle assembly. Interacts with envelope glycoprotein E1. Interacts with envelope glycoprotein E2. Interacts with viroporin p7. Interacts with serine protease/helicase NS3. Part of the replication complex composed of NS2, NS3, NS4A, NS4B, NS5A and the RNA-directed RNA polymerase embedded in an ER-derived membranous web. Part of the viral assembly initiation complex composed of NS2, E1, E2, NS3, NS4A, NS5A and the mature core protein. As to quaternary structure, interacts with protease NS2. Interacts with non-structural protein 4A; this interaction stabilizes the folding of NS3 serine protease. NS3-NS4A interaction is essential for NS3 activation and allows membrane anchorage of the latter. NS3/NS4A complex also prevents phosphorylation of host IRF3, thus preventing the establishment of dsRNA induced antiviral state. Interacts with host MAVS; this interaction leads to the cleavage and inhibition of host MAVS. Interacts with host TICAM1; this interaction leads to the cleavage and inhibition of host TICAM1. Interacts with host TANK-binding kinase/TBK1; this interaction results in the inhibition of the association between TBK1 and IRF3, which leads to the inhibition of IRF3 activation. Interacts with host RBM24. Part of the replication complex composed of NS2, NS3, NS4A, NS4B, NS5A and the RNA-directed RNA polymerase embedded in an ER-derived membranous web. Part of the viral assembly initiation complex composed of NS2, E1, E2, NS3, NS4A, NS5A and the mature core protein. In terms of assembly, interacts with NS3 serine protease; this interaction stabilizes the folding of NS3 serine protease. NS3-NS4A interaction is essential for NS3 activation and allows membrane anchorage of the latter. Interacts with non-structural protein 5A (via N-terminus). Part of the replication complex composed of NS2, NS3, NS4A, NS4B, NS5A and the RNA-directed RNA polymerase embedded in an ER-derived membranous web. Part of the viral assembly initiation complex composed of NS2, E1, E2, NS3, NS4A, NS5A and the mature core protein. Homomultimer. Interacts with non-structural protein NS5A. Interacts with host PLA2G4C; this interaction likely initiates the recruitment of replication complexes to lipid droplets. Interacts with host STING; this interaction disrupts the interaction between STING and TBK1 thereby suppressing the interferon signaling. Part of the replication complex composed of NS2, NS3, NS4A, NS4B, NS5A and the RNA-directed RNA polymerase embedded in an ER-derived membranous web. As to quaternary structure, monomer. Homodimer; dimerization is required for RNA-binding. Interacts with the mature core protein. Interacts (via N-terminus) with non-structural protein 4A. Interacts with non-structural protein 4B. Interacts (via region D2) with RNA-directed RNA polymerase. Part of the viral assembly initiation complex composed of NS2, E1, E2, NS3, NS4A, NS5A and the mature core protein. Part of the replication complex composed of NS2, NS3, NS4A, NS4B, NS5A and the RNA-directed RNA polymerase embedded in an ER-derived membranous web. Interacts with host GRB2. Interacts with host BIN1. Interacts with host PIK3R1. Interacts with host SRCAP. Interacts with host FKBP8. Interacts (via C-terminus) with host VAPB (via MSP domain). Interacts with host EIF2AK2/PKR; this interaction leads to disruption of EIF2AK2 dimerization by NS5A and probably allows the virus to evade the innate immune response. Interacts (via N-terminus) with host PACSIN2 (via N-terminus); this interaction attenuates protein kinase C alpha-mediated phosphorylation of PACSIN2 by disrupting the interaction between PACSIN2 and PRKCA. Interacts (via N-terminus) with host SRC kinase (via SH2 domain). Interacts with most Src-family kinases. Interacts with host IFI27 and SKP2; promotes the ubiquitin-mediated proteasomal degradation of NS5A. Interacts with host GPS2. Interacts with host TNFRSF21; this interaction allows the modulation by the virus of JNK, p38 MAPK, STAT3, and Akt signaling pathways in a DR6-dependent manner. Interacts (via N-terminus) with host CIDEB (via N-terminus); this interaction seems to regulate the association of HCV particles with APOE. Interacts with host CHKA/Choline Kinase-alpha; CHKA bridges host PI4KA and NS5A and potentiates NS5A-stimulated PI4KA activity, which then facilitates the targeting of the ternary complex to the ER for viral replication. Interacts with host SPSB2 (via C-terminus); this interaction targets NS5A for ubiquitination and degradation. Interacts with host RAB18; this interaction may promote the association of NS5A and other replicase components with lipid droplets. Interacts (via region D2) with host PPIA/CYPA; the interaction stimulates RNA-binding ability of NS5A and is dependent on the peptidyl-prolyl cis-trans isomerase activity of PPIA/CYPA. Interacts with host TRIM14; this interaction induces the degradation of NS5A. In terms of assembly, homooligomer. Interacts with non-structural protein 5A. Interacts with host VAPB. Interacts with host PRK2/PKN2. Interacts with host HNRNPA1 and SEPT6; these interactions facilitate viral replication. Part of the replication complex composed of NS2, NS3, NS4A, NS4B, NS5A and the RNA-directed RNA polymerase. Zn(2+) serves as cofactor. It depends on Mg(2+) as a cofactor. Post-translationally, specific enzymatic cleavages in vivo yield mature proteins. The structural proteins, core, E1, E2 and p7 are produced by proteolytic processing by host signal peptidases. The core protein precursor is synthesized as a 23 kDa, which is retained in the ER membrane through the hydrophobic signal peptide. Cleavage by the signal peptidase releases the 21 kDa mature core protein. The cleavage of the core protein precursor occurs between aminoacids 176 and 188 but the exact cleavage site is not known. Some degraded forms of the core protein appear as well during the course of infection. The other proteins (p7, NS2, NS3, NS4A, NS4B, NS5A and NS5B) are cleaved by the viral proteases. Autoprocessing between NS2 and NS3 is mediated by the NS2 cysteine protease catalytic domain and regulated by the NS3 N-terminal domain. Phosphorylated by host PKC and PKA. In terms of processing, ubiquitinated; mediated by UBE3A and leading to core protein subsequent proteasomal degradation. Post-translationally, highly N-glycosylated. Palmitoylation is required for NS2/3 autoprocessing and E2 recruitment to membranes. In terms of processing, palmitoylated. This modification may play a role in its polymerization or in protein-protein interactions. Post-translationally, phosphorylated on serines in a basal form termed p56. p58 is a hyperphosphorylated form of p56. p56 and p58 coexist in the cell in roughly equivalent amounts. Hyperphosphorylation is dependent on the presence of NS4A. Host CSNK1A1/CKI-alpha or RPS6KB1 kinases may be responsible for NS5A phosphorylation. Tyrosine phosphorylation is essential for the interaction with host SRC. In terms of processing, the N-terminus is phosphorylated by host PRK2/PKN2.

The protein localises to the host endoplasmic reticulum membrane. It localises to the host mitochondrion membrane. The protein resides in the virion. Its subcellular location is the host cytoplasm. It is found in the host nucleus. The protein localises to the host lipid droplet. It localises to the virion membrane. The protein resides in the host mitochondrion. Its subcellular location is the host cell membrane. It is found in the host perinuclear region. It carries out the reaction Hydrolysis of four peptide bonds in the viral precursor polyprotein, commonly with Asp or Glu in the P6 position, Cys or Thr in P1 and Ser or Ala in P1'.. The enzyme catalyses a ribonucleoside 5'-triphosphate + H2O = a ribonucleoside 5'-diphosphate + phosphate + H(+). The catalysed reaction is ATP + H2O = ADP + phosphate + H(+). It catalyses the reaction RNA(n) + a ribonucleoside 5'-triphosphate = RNA(n+1) + diphosphate. Inhibited by the antiviral drug hexamethylene amiloride. Inhibition by amantadine appears to be genotype-dependent. Also inhibited by long-alkyl-chain iminosugar derivatives. With respect to regulation, activity is up-regulated by PRK2/PKN2-mediated phosphorylation. In terms of biological role, packages viral RNA to form a viral nucleocapsid, and promotes virion budding. Participates in the viral particle production as a result of its interaction with the non-structural protein 5A. Binds RNA and may function as a RNA chaperone to induce the RNA structural rearrangements taking place during virus replication. Modulates viral translation initiation by interacting with viral IRES and 40S ribosomal subunit. Affects various cell signaling pathways, host immunity and lipid metabolism. Prevents the establishment of cellular antiviral state by blocking the interferon-alpha/beta (IFN-alpha/beta) and IFN-gamma signaling pathways and by blocking the formation of phosphorylated STAT1 and promoting ubiquitin-mediated proteasome-dependent degradation of STAT1. Activates STAT3 leading to cellular transformation. Regulates the activity of cellular genes, including c-myc and c-fos. May repress the promoter of p53, and sequester CREB3 and SP110 isoform 3/Sp110b in the cytoplasm. Represses cell cycle negative regulating factor CDKN1A, thereby interrupting an important check point of normal cell cycle regulation. Targets transcription factors involved in the regulation of inflammatory responses and in the immune response: suppresses TNF-induced NF-kappa-B activation, and activates AP-1. Binds to dendritic cells (DCs) via C1QR1, resulting in down-regulation of T-lymphocytes proliferation. Alters lipid metabolism by interacting with hepatocellular proteins involved in lipid accumulation and storage. Induces up-regulation of FAS promoter activity, and thereby contributes to the increased triglyceride accumulation in hepatocytes (steatosis). Forms a heterodimer with envelope glycoprotein E2, which mediates virus attachment to the host cell, virion internalization through clathrin-dependent endocytosis and fusion with host membrane. Fusion with the host cell is most likely mediated by both E1 and E2, through conformational rearrangements of the heterodimer required for fusion rather than a classical class II fusion mechanism. E1/E2 heterodimer binds host apolipoproteins such as APOB and ApoE thereby forming a lipo-viro-particle (LVP). APOE associated to the LVP allows the initial virus attachment to cell surface receptors such as the heparan sulfate proteoglycans (HSPGs), syndecan-1 (SDC1), syndecan-1 (SDC2), the low-density lipoprotein receptor (LDLR) and scavenger receptor class B type I (SCARB1). The cholesterol transfer activity of SCARB1 allows E2 exposure and binding of E2 to SCARB1 and the tetraspanin CD81. E1/E2 heterodimer binding on CD81 activates the epithelial growth factor receptor (EGFR) signaling pathway. Diffusion of the complex E1-E2-EGFR-SCARB1-CD81 to the cell lateral membrane allows further interaction with Claudin 1 (CLDN1) and occludin (OCLN) to finally trigger HCV entry. Its function is as follows. Forms a heterodimer with envelope glycoprotein E1, which mediates virus attachment to the host cell, virion internalization through clathrin-dependent endocytosis and fusion with host membrane. Fusion with the host cell is most likely mediated by both E1 and E2, through conformational rearrangements of the heterodimer required for fusion rather than a classical class II fusion mechanism. The interaction between envelope glycoprotein E2 and host apolipoprotein E/APOE allows the proper assembly, maturation and infectivity of the viral particles. This interaction is probably promoted via the up-regulation of cellular autophagy by the virus. E1/E2 heterodimer binds host apolipoproteins such as APOB and APOE thereby forming a lipo-viro-particle (LVP). APOE associated to the LVP allows the initial virus attachment to cell surface receptors such as the heparan sulfate proteoglycans (HSPGs), syndecan-1 (SDC1), syndecan-1 (SDC2), the low-density lipoprotein receptor (LDLR) and scavenger receptor class B type I (SCARB1). The cholesterol transfer activity of SCARB1 allows E2 exposure and binding of E2 to SCARB1 and the tetraspanin CD81. E1/E2 heterodimer binding on CD81 activates the epithelial growth factor receptor (EGFR) signaling pathway. Diffusion of the complex E1-E2-EGFR-SCARB1-CD81 to the cell lateral membrane allows further interaction with Claudin 1 (CLDN1) and occludin (OCLN) to finally trigger HCV entry. Inhibits host EIF2AK2/PKR activation, preventing the establishment of an antiviral state. Viral ligand for CD209/DC-SIGN and CLEC4M/DC-SIGNR, which are respectively found on dendritic cells (DCs), and on liver sinusoidal endothelial cells and macrophage-like cells of lymph node sinuses. These interactions allow the capture of circulating HCV particles by these cells and subsequent facilitated transmission to permissive cells such as hepatocytes and lymphocyte subpopulations. The interaction between E2 and host amino acid transporter complex formed by SLC3A2 and SLC7A5/LAT1 may facilitate viral entry into host cell. Functionally, ion channel protein that acts as a viroporin and plays an essential role in the assembly, envelopment and secretion of viral particles. Regulates the host cell secretory pathway, which induces the intracellular retention of viral glycoproteins and favors assembly of viral particles. Creates a pore in acidic organelles and releases Ca(2+) and H(+) in the cytoplasm of infected cells, leading to a productive viral infection. High levels of cytoplasmic Ca(2+) may trigger membrane trafficking and transport of viral ER-associated proteins to viroplasms, sites of viral genome replication. This ionic imbalance induces the assembly of the inflammasome complex, which triggers the maturation of pro-IL-1beta into IL-1beta through the action of caspase-1. Targets also host mitochondria and induces mitochondrial depolarization. In addition of its role as a viroporin, acts as a lipid raft adhesion factor. In terms of biological role, cysteine protease required for the proteolytic auto-cleavage between the non-structural proteins NS2 and NS3. The N-terminus of NS3 is required for the function of NS2 protease (active region NS2-3). Promotes the initiation of viral particle assembly by mediating the interaction between structural and non-structural proteins. Displays three enzymatic activities: serine protease with a chymotrypsin-like fold, NTPase and RNA helicase. NS3 serine protease, in association with NS4A, is responsible for the cleavages of NS3-NS4A, NS4A-NS4B, NS4B-NS5A and NS5A-NS5B. The NS3/NS4A complex prevents phosphorylation of host IRF3, thus preventing the establishment of dsRNA induced antiviral state. The NS3/NS4A complex induces host amino acid transporter component SLC3A2, thus contributing to HCV propagation. NS3 RNA helicase binds to RNA and unwinds both dsDNA and dsRNA in the 3' to 5' direction, and likely resolves RNA complicated stable secondary structures in the template strand. Binds a single ATP and catalyzes the unzipping of a single base pair of dsRNA. Inhibits host antiviral proteins TBK1 and IRF3 thereby preventing the establishment of an antiviral state. Cleaves host MAVS/CARDIF thereby preventing the establishment of an antiviral state. Cleaves host TICAM1/TRIF, thereby disrupting TLR3 signaling and preventing the establishment of an antiviral state. Its function is as follows. Induces a specific membrane alteration that serves as a scaffold for the virus replication complex. This membrane alteration gives rise to the so-called ER-derived membranous web that contains the replication complex. NS4B self-interaction contributes to its function in membranous web formation. Promotes host TRIF protein degradation in a CASP8-dependent manner thereby inhibiting host TLR3-mediated interferon signaling. Disrupts the interaction between STING and TBK1 contributing to the inhibition of interferon signaling. Functionally, phosphorylated protein that is indispensable for viral replication and assembly. Both hypo- and hyperphosphorylated states are required for the viral life cycle. The hyperphosphorylated form of NS5A is an inhibitor of viral replication. Involved in RNA-binding and especially in binding to the viral genome. Zinc is essential for RNA-binding. Participates in the viral particle production as a result of its interaction with the mature viral core protein. Its interaction with host VAPB may target the viral replication complex to vesicles. Down-regulates viral IRES translation initiation. Mediates interferon resistance, presumably by interacting with and inhibiting host EIF2AK2/PKR. Prevents BIN1-induced apoptosis. Acts as a transcriptional activator of some host genes important for viral replication when localized in the nucleus. Via the interaction with host PACSIN2, modulates lipid droplet formation in order to promote virion assembly. Modulates TNFRSF21/DR6 signaling pathway for viral propagation. In terms of biological role, RNA-dependent RNA polymerase that performs primer-template recognition and RNA synthesis during viral replication. Initiates RNA transcription/replication at a flavin adenine dinucleotide (FAD), resulting in a 5'- FAD cap on viral RNAs. In this way, recognition of viral 5' RNA by host pattern recognition receptors can be bypassed, thereby evading activation of antiviral pathways. This chain is Genome polyprotein, found in Homo sapiens (Human).